The following is a 285-amino-acid chain: Ribosomal protein L11 methyltransferase (285 aa).

S-adenosyl-L-methionine is bound by residues T131, G154, D176, and N223.

The protein belongs to the methyltransferase superfamily. PrmA family.

The protein localises to the cytoplasm. It catalyses the reaction L-lysyl-[protein] + 3 S-adenosyl-L-methionine = N(6),N(6),N(6)-trimethyl-L-lysyl-[protein] + 3 S-adenosyl-L-homocysteine + 3 H(+). Its function is as follows. Methylates ribosomal protein L11. This is Ribosomal protein L11 methyltransferase from Brucella abortus (strain S19).